Reading from the N-terminus, the 652-residue chain is DNA ligase (652 aa).

Residues 29-33 (DSEYD), 78-79 (SL), and glutamate 107 each bind NAD(+). The N6-AMP-lysine intermediate role is filled by lysine 109. NAD(+) is bound by residues arginine 130, glutamate 164, lysine 278, and lysine 302. Zn(2+)-binding residues include cysteine 395, cysteine 398, cysteine 413, and cysteine 418. One can recognise a BRCT domain in the interval 577–652 (AADAALSGMT…IRDEDWLDSL (76 aa)).

This sequence belongs to the NAD-dependent DNA ligase family. LigA subfamily. Mg(2+) is required as a cofactor. The cofactor is Mn(2+).

The enzyme catalyses NAD(+) + (deoxyribonucleotide)n-3'-hydroxyl + 5'-phospho-(deoxyribonucleotide)m = (deoxyribonucleotide)n+m + AMP + beta-nicotinamide D-nucleotide.. Functionally, DNA ligase that catalyzes the formation of phosphodiester linkages between 5'-phosphoryl and 3'-hydroxyl groups in double-stranded DNA using NAD as a coenzyme and as the energy source for the reaction. It is essential for DNA replication and repair of damaged DNA. In Streptococcus sanguinis (strain SK36), this protein is DNA ligase.